Consider the following 571-residue polypeptide: Proline--tRNA ligase (571 aa).

This sequence belongs to the class-II aminoacyl-tRNA synthetase family. ProS type 1 subfamily. Homodimer.

It localises to the cytoplasm. It catalyses the reaction tRNA(Pro) + L-proline + ATP = L-prolyl-tRNA(Pro) + AMP + diphosphate. Its function is as follows. Catalyzes the attachment of proline to tRNA(Pro) in a two-step reaction: proline is first activated by ATP to form Pro-AMP and then transferred to the acceptor end of tRNA(Pro). As ProRS can inadvertently accommodate and process non-cognate amino acids such as alanine and cysteine, to avoid such errors it has two additional distinct editing activities against alanine. One activity is designated as 'pretransfer' editing and involves the tRNA(Pro)-independent hydrolysis of activated Ala-AMP. The other activity is designated 'posttransfer' editing and involves deacylation of mischarged Ala-tRNA(Pro). The misacylated Cys-tRNA(Pro) is not edited by ProRS. This Actinobacillus pleuropneumoniae serotype 3 (strain JL03) protein is Proline--tRNA ligase.